Here is an 87-residue protein sequence, read N- to C-terminus: UPF0473 protein Dred_0776 (87 aa).

The protein belongs to the UPF0473 family.

The sequence is that of UPF0473 protein Dred_0776 from Desulforamulus reducens (strain ATCC BAA-1160 / DSM 100696 / MI-1) (Desulfotomaculum reducens).